A 320-amino-acid chain; its full sequence is Aspartate carbamoyltransferase catalytic subunit (320 aa).

Carbamoyl phosphate-binding residues include R68 and T69. K96 is an L-aspartate binding site. Carbamoyl phosphate contacts are provided by R118, H148, and Q151. L-aspartate contacts are provided by R181 and R236. Carbamoyl phosphate is bound by residues G277 and P278.

The protein belongs to the aspartate/ornithine carbamoyltransferase superfamily. ATCase family. In terms of assembly, heterododecamer (2C3:3R2) of six catalytic PyrB chains organized as two trimers (C3), and six regulatory PyrI chains organized as three dimers (R2).

It carries out the reaction carbamoyl phosphate + L-aspartate = N-carbamoyl-L-aspartate + phosphate + H(+). It participates in pyrimidine metabolism; UMP biosynthesis via de novo pathway; (S)-dihydroorotate from bicarbonate: step 2/3. In terms of biological role, catalyzes the condensation of carbamoyl phosphate and aspartate to form carbamoyl aspartate and inorganic phosphate, the committed step in the de novo pyrimidine nucleotide biosynthesis pathway. The polypeptide is Aspartate carbamoyltransferase catalytic subunit (Polaromonas naphthalenivorans (strain CJ2)).